We begin with the raw amino-acid sequence, 307 residues long: Ubiquitin recognition factor in ER-associated degradation protein 1 (307 aa).

At methionine 1 the chain carries N-acetylmethionine. Phosphoserine is present on residues serine 129, serine 231, serine 245, serine 247, and serine 299. 2 disordered regions span residues 230–255 and 282–307; these read GSGN…GDIK and EEDE…GRKP.

Belongs to the UFD1 family. As to quaternary structure, interacts with USP13. Heterodimer with NPLOC4, this heterodimer binds VCP and inhibits Golgi membrane fusion. Interacts with ZFAND2B; probably through VCP.

It is found in the nucleus. Its subcellular location is the cytoplasm. It localises to the cytosol. The protein operates within protein degradation; proteasomal ubiquitin-dependent pathway. Its function is as follows. Essential component of the ubiquitin-dependent proteolytic pathway which degrades ubiquitin fusion proteins. The ternary complex containing UFD1, VCP and NPLOC4 binds ubiquitinated proteins and is necessary for the export of misfolded proteins from the ER to the cytoplasm, where they are degraded by the proteasome. The NPLOC4-UFD1-VCP complex regulates spindle disassembly at the end of mitosis and is necessary for the formation of a closed nuclear envelope. It may be involved in the development of some ectoderm-derived structures. Acts as a negative regulator of type I interferon production via the complex formed with VCP and NPLOC4, which binds to RIGI and recruits RNF125 to promote ubiquitination and degradation of RIGI. This chain is Ubiquitin recognition factor in ER-associated degradation protein 1, found in Rattus norvegicus (Rat).